The chain runs to 87 residues: Small ribosomal subunit protein bS18 (87 aa).

Positions 1 to 10 are enriched in basic and acidic residues; that stretch reads MAGKSSGDRR. The interval 1-23 is disordered; the sequence is MAGKSSGDRRKLLRGAKVGKNAA.

Belongs to the bacterial ribosomal protein bS18 family. As to quaternary structure, part of the 30S ribosomal subunit. Forms a tight heterodimer with protein bS6.

Its function is as follows. Binds as a heterodimer with protein bS6 to the central domain of the 16S rRNA, where it helps stabilize the platform of the 30S subunit. This chain is Small ribosomal subunit protein bS18, found in Clavibacter sepedonicus (Clavibacter michiganensis subsp. sepedonicus).